We begin with the raw amino-acid sequence, 92 residues long: Large ribosomal subunit protein eL43 (92 aa).

The segment at 39–60 adopts a C4-type zinc-finger fold; it reads CEFCGKYAVKRKAVGIWGCKAC.

The protein belongs to the eukaryotic ribosomal protein eL43 family.

The chain is Large ribosomal subunit protein eL43 (RPL37A) from Gossypium hirsutum (Upland cotton).